The primary structure comprises 597 residues: Gamma-terpinene synthase, chloroplastic (597 aa).

Residues 1–47 constitute a chloroplast transit peptide; that stretch reads MATLSMQVSILSKQVKNLNSFGMRASKLPMVARRVDVSTTRLRPICS. Residues Asp-350 and Asp-354 each contribute to the Mn(2+) site. The DDXXD motif signature appears at 350–354; the sequence is DDVYD. 2 homodimerization regions span residues 356–362 and 428–464; these read YGTLDEL and EAKW…YFTL. Asp-494 and Glu-502 together coordinate Mn(2+).

This sequence belongs to the terpene synthase family. In terms of assembly, homodimer. Requires Mn(2+) as cofactor. Mg(2+) serves as cofactor.

The protein localises to the plastid. It is found in the chloroplast. The catalysed reaction is (2E)-geranyl diphosphate = gamma-terpinene + diphosphate. Its pathway is secondary metabolite biosynthesis; terpenoid biosynthesis. In terms of biological role, involved in the biosynthesis of phenolic monoterpenes natural products thymol and carvacrol which have a broad range of biological activities acting as antimicrobial compounds, insecticides, antioxidants and pharmaceutical agents. Monoterpene synthase which catalyzes the conversion of geranyl diphosphate (GPP) to gamma-terpinene. This Thymus caespititius (Cretan thyme) protein is Gamma-terpinene synthase, chloroplastic.